Reading from the N-terminus, the 363-residue chain is UDP-3-O-acylglucosamine N-acyltransferase (363 aa).

Residue histidine 266 is the Proton acceptor of the active site.

Belongs to the transferase hexapeptide repeat family. LpxD subfamily. As to quaternary structure, homotrimer.

It carries out the reaction a UDP-3-O-[(3R)-3-hydroxyacyl]-alpha-D-glucosamine + a (3R)-hydroxyacyl-[ACP] = a UDP-2-N,3-O-bis[(3R)-3-hydroxyacyl]-alpha-D-glucosamine + holo-[ACP] + H(+). It functions in the pathway bacterial outer membrane biogenesis; LPS lipid A biosynthesis. In terms of biological role, catalyzes the N-acylation of UDP-3-O-acylglucosamine using 3-hydroxyacyl-ACP as the acyl donor. Is involved in the biosynthesis of lipid A, a phosphorylated glycolipid that anchors the lipopolysaccharide to the outer membrane of the cell. The chain is UDP-3-O-acylglucosamine N-acyltransferase from Bordetella bronchiseptica (strain ATCC BAA-588 / NCTC 13252 / RB50) (Alcaligenes bronchisepticus).